A 250-amino-acid polypeptide reads, in one-letter code: Triosephosphate isomerase (250 aa).

A substrate-binding site is contributed by 9 to 11; sequence NWK. H95 acts as the Electrophile in catalysis. The active-site Proton acceptor is the E167. Substrate contacts are provided by residues G173, S212, and 233 to 234; that span reads GG.

Belongs to the triosephosphate isomerase family. Homodimer.

It is found in the cytoplasm. The enzyme catalyses D-glyceraldehyde 3-phosphate = dihydroxyacetone phosphate. It participates in carbohydrate biosynthesis; gluconeogenesis. The protein operates within carbohydrate degradation; glycolysis; D-glyceraldehyde 3-phosphate from glycerone phosphate: step 1/1. In terms of biological role, involved in the gluconeogenesis. Catalyzes stereospecifically the conversion of dihydroxyacetone phosphate (DHAP) to D-glyceraldehyde-3-phosphate (G3P). In Psychromonas ingrahamii (strain DSM 17664 / CCUG 51855 / 37), this protein is Triosephosphate isomerase.